We begin with the raw amino-acid sequence, 397 residues long: Tryptophan synthase beta chain (397 aa).

An N6-(pyridoxal phosphate)lysine modification is found at K91.

Belongs to the TrpB family. As to quaternary structure, tetramer of two alpha and two beta chains. It depends on pyridoxal 5'-phosphate as a cofactor.

The enzyme catalyses (1S,2R)-1-C-(indol-3-yl)glycerol 3-phosphate + L-serine = D-glyceraldehyde 3-phosphate + L-tryptophan + H2O. It functions in the pathway amino-acid biosynthesis; L-tryptophan biosynthesis; L-tryptophan from chorismate: step 5/5. Functionally, the beta subunit is responsible for the synthesis of L-tryptophan from indole and L-serine. The chain is Tryptophan synthase beta chain from Bacillus anthracis (strain A0248).